We begin with the raw amino-acid sequence, 404 residues long: Probable tRNA sulfurtransferase (404 aa).

The 106-residue stretch at 60-165 folds into the THUMP domain; sequence HEVAESLKEI…DEAAYISYEN (106 aa). Residues 183–184, 208–209, arginine 265, glycine 287, and glutamine 296 contribute to the ATP site; these read ML and HF.

The protein belongs to the ThiI family.

It is found in the cytoplasm. The enzyme catalyses [ThiI sulfur-carrier protein]-S-sulfanyl-L-cysteine + a uridine in tRNA + 2 reduced [2Fe-2S]-[ferredoxin] + ATP + H(+) = [ThiI sulfur-carrier protein]-L-cysteine + a 4-thiouridine in tRNA + 2 oxidized [2Fe-2S]-[ferredoxin] + AMP + diphosphate. It catalyses the reaction [ThiS sulfur-carrier protein]-C-terminal Gly-Gly-AMP + S-sulfanyl-L-cysteinyl-[cysteine desulfurase] + AH2 = [ThiS sulfur-carrier protein]-C-terminal-Gly-aminoethanethioate + L-cysteinyl-[cysteine desulfurase] + A + AMP + 2 H(+). Its pathway is cofactor biosynthesis; thiamine diphosphate biosynthesis. Functionally, catalyzes the ATP-dependent transfer of a sulfur to tRNA to produce 4-thiouridine in position 8 of tRNAs, which functions as a near-UV photosensor. Also catalyzes the transfer of sulfur to the sulfur carrier protein ThiS, forming ThiS-thiocarboxylate. This is a step in the synthesis of thiazole, in the thiamine biosynthesis pathway. The sulfur is donated as persulfide by IscS. The sequence is that of Probable tRNA sulfurtransferase from Streptococcus agalactiae serotype III (strain NEM316).